A 567-amino-acid chain; its full sequence is Chaperone ric-8 (567 aa).

The protein belongs to the synembryn family.

It localises to the cytoplasm. The protein resides in the cell cortex. Chaperone that specifically binds and folds some, but not all, nascent G alpha proteins prior to G protein heterotrimer formation, promoting their stability and activity. Also acts as a guanine nucleotide exchange factor (GEF) for G alpha proteins by stimulating exchange of bound GDP for free GTP. Able to facilitate synaptic transmission in the nervous system probably by activating G(q)-alpha (egl-30). Also able to activate the G(s)-alpha in synaptic signaling network. Plays a key role in asymmetric spindle positioning, a step for asymmetric cell division that generates cell diversity during development by activating G(i)-alpha protein goa-1 and gpa-16 independently of G-protein coupled receptors. While it acts as a GEF for goa-1, it has no GEF activity toward gpa-16. In addition to its GEF activity, it is required for cortical subcellular localization of G-alpha proteins such as gpa-16. Also required for the interaction of goa-1 and gpr-1/2, suggesting that it may act by generating G-alpha proteins free from G-beta-gamma subunits, enabling gpr-1/2 to mediate asymmetric cell division. The sequence is that of Chaperone ric-8 (ric-8) from Caenorhabditis briggsae.